We begin with the raw amino-acid sequence, 78 residues long: Protein GPR15LG (78 aa).

Residues 1-24 form the signal peptide; that stretch reads MRLLALSGLLCMLLLCFCIFSSEG. Cystine bridges form between cysteine 37–cysteine 60 and cysteine 38–cysteine 57.

In terms of assembly, interacts with SUSD2; the interaction is direct. In terms of tissue distribution, highly abundant in the testis, colon, eye, and tongue. Detected in the epithelial layer of the colon, but not the small intestine.

The protein localises to the secreted. Functionally, highly cationic protein that has multiple functions. Acts as a chemotactic factor that mediates lymphocytes recruitment to epithelia through binding and activation of the G-protein coupled receptor GPR15. May be a tumor suppressor; together with SUSD2 has a growth inhibitory effect on colon cancer cells which includes G1 cell cycle arrest. May regulate keratinocyte proliferation. In addition, through activation of Mas-related G protein-coupled receptors (MRGPRs) contributes to pruritogenesis by activating itch-selective sensory neurons and mast cells degranulation. In terms of biological role, has antimicrobial activity against Gram-positive bacteria, including Staphylococcus aureus and Actinomyces spec., and Mycoplasma hominis and lentivirus. This is Protein GPR15LG (Gpr15lg) from Mus musculus (Mouse).